The sequence spans 1099 residues: Solute carrier family 12 member 1 (1099 aa).

Residues 1 to 177 (MSLNNSSNVF…EDDQAGVVKF (177 aa)) are Cytoplasmic-facing. The short motif at 20–23 (RFQV) is the RFXV motif element. The segment at 31–53 (ESSAAADDNTDPPHYEETSFGDE) is disordered. S61 carries the post-translational modification Phosphoserine. Phosphoserine; by OXSR1 and STK39 is present on S91. T95 carries the phosphothreonine modification. A phosphothreonine; by OXSR1 and STK39 mark is found at T100 and T105. T118 carries the phosphothreonine modification. At S120 the chain carries Phosphoserine. Position 130 is a phosphoserine; by AMPK (S130). S148 carries the post-translational modification Phosphoserine. The helical transmembrane segment at 178–198 (GWVKGVLVRCMLNIWGVMLFI) threads the bilayer. The Extracellular portion of the chain corresponds to 199-201 (RLS). A helical membrane pass occupies residues 202-222 (WIVGEAGIGLGVLIILLSTMV). Topologically, residues 223–259 (TSITGLSTSAIATNGFVRGGGAYYLISRSLGPEFGGS) are cytoplasmic. Residues 260–280 (IGLIFAFANAVAVAMYVVGFA) form a helical membrane-spanning segment. Over 281–302 (ETVVDLLKESDSMMVDPTNDIR) the chain is Extracellular. The helical transmembrane segment at 303–323 (IIGSITVVILLGISVAGMEWE) threads the bilayer. The Cytoplasmic portion of the chain corresponds to 324-327 (AKAQ). Residues 328-348 (VILLVILLIAIANFFIGTVIP) form a helical membrane-spanning segment. The Extracellular segment spans residues 349–379 (SNNEKKSRGFFNYQASIFAENFGPRFTKGEG). The chain crosses the membrane as a helical span at residues 380 to 400 (FFSVFAIFFPAATGILAGANI). The Cytoplasmic segment spans residues 401–417 (SGDLEDPQDAIPRGTML). The chain crosses the membrane as a helical span at residues 418 to 438 (AIFITTVAYLGVAICVGACVV). Topologically, residues 439-550 (RDATGNMNDT…NNEPLRGYIL (112 aa)) are extracellular. N446 and N456 each carry an N-linked (GlcNAc...) asparagine glycan. 2 helical membrane passes run 551–571 (TFLI…APII) and 572–592 (SNFF…ASYA). Over 593–609 (KSPGWRPAYGIYNMWVS) the chain is Extracellular. The chain crosses the membrane as a helical span at residues 610 to 630 (LFGAVLCCAVMFVINWWAAVI). The Cytoplasmic portion of the chain corresponds to 631-1099 (TYVIEFFLYV…NHKNVLTFYS (469 aa)).

This sequence belongs to the SLC12A transporter family. When phosphorylated, interacts with PPP3CB. Post-translationally, phosphorylated at Ser-91, Thr-100 and Thr-105 by OXSR1/OSR1 and STK39/SPAK downstream of WNK kinases (WNK1, WNK2, WNK3 or WNK4), promoting its activity. Kidney; localizes to the thick ascending limbs (at protein level).

Its subcellular location is the apical cell membrane. It catalyses the reaction K(+)(out) + 2 chloride(out) + Na(+)(out) = K(+)(in) + 2 chloride(in) + Na(+)(in). With respect to regulation, activated following phosphorylation by OXSR1/OSR1 and STK39/SPAK downstream of WNK kinases (WNK1, WNK2, WNK3 or WNK4). Renal sodium, potassium and chloride ion cotransporter that mediates the transepithelial NaCl reabsorption in the thick ascending limb and plays an essential role in the urinary concentration and volume regulation. Electrically silent transporter system. This is Solute carrier family 12 member 1 (SLC12A1) from Homo sapiens (Human).